Consider the following 162-residue polypeptide: Peptide methionine sulfoxide reductase MsrA (162 aa).

Cys-16 is an active-site residue.

This sequence belongs to the MsrA Met sulfoxide reductase family.

The catalysed reaction is L-methionyl-[protein] + [thioredoxin]-disulfide + H2O = L-methionyl-(S)-S-oxide-[protein] + [thioredoxin]-dithiol. It catalyses the reaction [thioredoxin]-disulfide + L-methionine + H2O = L-methionine (S)-S-oxide + [thioredoxin]-dithiol. In terms of biological role, has an important function as a repair enzyme for proteins that have been inactivated by oxidation. Catalyzes the reversible oxidation-reduction of methionine sulfoxide in proteins to methionine. This Geobacter metallireducens (strain ATCC 53774 / DSM 7210 / GS-15) protein is Peptide methionine sulfoxide reductase MsrA.